We begin with the raw amino-acid sequence, 620 residues long: MSGIAEFDGILDSLEHSKTGISGSKILKLTNLSMENVSENAQFVASVYKYAKRAPVTHKLGALYILDSIVRSFQDGAKKNNESFENPVDASFSGGWCKAAEITDSLVADAIQHAPSAHLPKILKLCDIWEKASTFPPEKLESLRSKLKDAMASTEPVSVDSAAAPSQSTNPEGNGGSVGSQAAAPTSRPVENDAASILEALAAFAQKAPVPSAAEESVSTPPQPAVAPSVSAVVPNLPVHPATAINAQSQSGNPLSNPLFQPSNVPQSIPSGPMGMKTGSVNDTQSQQITLMNVLASQNVPPAQIDSIMKAAFPNYNAPFQPAGVGSVPLPAPTSSQSLRLGSLHRSRSPSPRSGRPRRSPSPSHLSIPSTLPPADGVPKPTPDGFPRRFERDPTIPPDSIKVYSRTLFLGGITRSVREPVLRSMFERFGSVQSLILNHNYRHGFLKMFRRDAAEKAQVAMENVPFADTTIRTKWGVGFGPRECSDFSTGISVIPIRLLTDADRTWLVTAEYGGTGGLPITPGIALDEPDIEIGLGISSKAISKRGKDFAMRRDERFRGRKPYRGGPPIHHGERHFDSGNDWHGNPSTVPPPTNPYNPGYPYMDPNYSSGYVSQPPWQPQ.

In terms of domain architecture, CID spans 1-151 (MSGIAEFDGI…SLRSKLKDAM (151 aa)). Disordered stretches follow at residues 151 to 191 (MAST…RPVE) and 327 to 398 (SVPL…TIPP). At serine 343 the chain carries Phosphoserine. Positions 361–374 (PSPSHLSIPSTLPP) are enriched in low complexity. One can recognise an RRM domain in the interval 406–478 (RTLFLGGITR…TTIRTKWGVG (73 aa)). The tract at residues 558–620 (RGRKPYRGGP…YVSQPPWQPQ (63 aa)) is disordered. A compositionally biased stretch (basic and acidic residues) spans 570–580 (HHGERHFDSGN).

Interacts with rpb7.

The protein resides in the nucleus. Its function is as follows. Involved in the processing of pol II transcripts. The polypeptide is Rpb7-binding protein seb1 (seb1) (Schizosaccharomyces pombe (strain 972 / ATCC 24843) (Fission yeast)).